Here is an 897-residue protein sequence, read N- to C-terminus: MGMATYAVVDLETTGNQLDFDDIIQIGITFVRNNQIIDTYHSMIRTNLEIPPFIQALTSIEENMLQQAPYFNQVAQEIYDKIKDCIFVAHNVDFDLNFIKKAFKDCNIQYRPKKVIDTLEIFKIAFPTDKSYQLSELAEAHGITLANAHRADEDAATTAKLMILAFEKFEKLPLDTLKQLYYLSKQLKYDLYDIFFEMVRQYDAKPLDKSYEKFEQIIYRKQVDFKKPTTNYNGSLKSLYSKAVDQLGLTYRPQQLYLAETILDQLMHSEKAMIEASLGSGKSLAYLLAALMYNIETGKHVMISTNTKLLQSQLLEKDIPAMNEALNFKINALLIKSKSDYISLGLISQILKDDTSNYEVNILKMQLLIWITETPSGDIQELNLKGGQKMYFDQKIETYVPARHDVHYYNFIKRNAQNIQIGITNHAHLIHSDVENSIYQLFDDCIVDEAHRLPDYALNQVTNELSYADIKYQLGLIGKNENEKLLKAIDQLEKQRILEKLDIAPIDIFGLKASMNEIHELNEQLFSTIFTIINDSDVYDDDIHRFHNVFTFETKDILKDLHAIIDKLNKTLEIFNGISHKTVKSLRKQLLYLKDKFKNIEQSLKAGHTSFISIKNLSQKSTIRLYVKDYAVKDVLTKQVLEKFKSLIFISGTLKFNHSFEAFKQLFNKDVHFNTFEVNTSLQSAKNTSVFIPSDVASYQYKNIDEYVASIVSYIIEYTTITSSKCLVLFTSYKMMHMVQDMLNELPEFEDYVVLTQQQNQNYKIVQQFNNFDKAILLGTSTFFEGFDFQANGIKCVMIAKLPFMNKHNAKYWLMDSEFTSTFKEYVLPDAVTRFRQGLGRLIRSENDRGIIVSFDDRLINSNYKNFFEQTLENYRQKKGDIQQFGKLLRQIQKKKK.

Positions 8 to 161 (VVDLETTGNQ…DEDAATTAKL (154 aa)) constitute an Exonuclease domain. The Helicase ATP-binding domain occupies 241 to 496 (SKAVDQLGLT…KAIDQLEKQR (256 aa)). 276 to 283 (ASLGSGKS) is a binding site for ATP. The short motif at 448–451 (DEAH) is the DEAH box element. The Helicase C-terminal domain maps to 703-893 (NIDEYVASIV…QFGKLLRQIQ (191 aa)).

Belongs to the helicase family. DinG subfamily. Type 2 sub-subfamily.

Its function is as follows. 3'-5' exonuclease. The polypeptide is 3'-5' exonuclease DinG (Staphylococcus aureus (strain MSSA476)).